The following is a 538-amino-acid chain: uncharacterized protein (538 aa).

Positions 1–17 (MNLQILLLLLLFCHVAA) are cleaved as a signal peptide. An N-linked (GlcNAc...) asparagine glycan is attached at asparagine 115.

This is an uncharacterized protein from Caenorhabditis elegans.